The primary structure comprises 333 residues: MQLLKDKFGRVHDYIRISVTDRCNLRCVYCMPEEGLTFLPHEKVLSKDEIVSFMELMVKFGIKKVRITGGEPLLRTDIVEIVRGLGAIPEIEDISITTNAMYLAKKAEALKEAGLTRVNISLDSLHADRFKAITRGGRLQKVLDGIQKAEEVGLFPIKLNVVLIKGQNDDEITDFLRFTKDKDINIRFIEYMPIGHAGTSWKEKYLPLDTIFEACNEAGYEYEPVDSIRGNGPSENFRIKGAKGTFGVIHPVSAHFCDSCNRLRLTADGYIKACLYWDEEMNIRPFIQDPVKLMQLVQKAIDNKPENHEMALKLQDEVQSNKPTWRRMSQIGG.

Residues 7–221 (KFGRVHDYIR…FEACNEAGYE (215 aa)) enclose the Radical SAM core domain. Residue R16 participates in GTP binding. 2 residues coordinate [4Fe-4S] cluster: C23 and C27. Position 29 (Y29) interacts with S-adenosyl-L-methionine. C30 serves as a coordination point for [4Fe-4S] cluster. Position 66 (R66) interacts with GTP. G70 contributes to the S-adenosyl-L-methionine binding site. T97 is a binding site for GTP. S121 is an S-adenosyl-L-methionine binding site. K158 lines the GTP pocket. Residue M192 coordinates S-adenosyl-L-methionine. [4Fe-4S] cluster-binding residues include C257 and C260. 262–264 (RLR) is a GTP binding site. C274 serves as a coordination point for [4Fe-4S] cluster.

This sequence belongs to the radical SAM superfamily. MoaA family. As to quaternary structure, monomer and homodimer. [4Fe-4S] cluster serves as cofactor.

The enzyme catalyses GTP + AH2 + S-adenosyl-L-methionine = (8S)-3',8-cyclo-7,8-dihydroguanosine 5'-triphosphate + 5'-deoxyadenosine + L-methionine + A + H(+). It participates in cofactor biosynthesis; molybdopterin biosynthesis. Functionally, catalyzes the cyclization of GTP to (8S)-3',8-cyclo-7,8-dihydroguanosine 5'-triphosphate. The protein is GTP 3',8-cyclase of Listeria monocytogenes serovar 1/2a (strain ATCC BAA-679 / EGD-e).